Consider the following 727-residue polypeptide: Synaptic vesicle glycoprotein 2C (727 aa).

The interval 1 to 57 (MEDSYKDRTSLMKGAKDIAREVKKQTVKKVNQAVDRAQDEYTQRSYSRFQDEEDDDD) is interaction with SYT1. Residues 1-154 (MEDSYKDRTS…CGHGRFQWAL (154 aa)) are Cytoplasmic-facing. 2 disordered regions span residues 24 to 84 (KQTV…GHDE) and 109 to 128 (VGQPKGDEYKDRRELESERR). Phosphoserine is present on residues Ser75 and Ser76. Thr79 bears the Phosphothreonine mark. The segment covering 113–128 (KGDEYKDRRELESERR) has biased composition (basic and acidic residues). The helical transmembrane segment at 155 to 175 (FFVLGMALMADGVEVFVVGFV) threads the bilayer. Residues 176–191 (LPSAETDLCIPNSGSG) lie on the Extracellular side of the membrane. Residues 192 to 212 (WLGSIVYLGMMVGAFFWGGLA) form a helical membrane-spanning segment. Topologically, residues 213–226 (DKVGRKQSLLICMS) are cytoplasmic. The helical transmembrane segment at 227–247 (VNGFFAFLSSFVQGYGFFLFC) threads the bilayer. A topological domain (extracellular) is located at residue Arg248. Residues 249–269 (LLSGFGIGGAIPTVFSYFAEV) form a helical membrane-spanning segment. The Cytoplasmic segment spans residues 270–280 (LAREKRGEHLS). The chain crosses the membrane as a helical span at residues 281 to 301 (WLCMFWMIGGIYASAMAWAII). Topologically, residues 302–320 (PHYGWSFSMGSAYQFHSWR) are extracellular. The chain crosses the membrane as a helical span at residues 321–341 (VFVIVCALPCVSSVVALTFMP). Residues 342–437 (ESPRFLLEVG…PVRDNTIKLT (96 aa)) are Cytoplasmic-facing. A helical transmembrane segment spans residues 438–458 (IVWFTLSFGYYGLSVWFPDVI). Residues 459 to 578 (KPLQSDEYAL…CQITFDDDYS (120 aa)) are Extracellular-facing. Position 466 is a phosphotyrosine (Tyr466). 5 N-linked (GlcNAc...) asparagine glycosylation sites follow: Asn480, Asn484, Asn534, Asn559, and Asn565. Residues 519-563 (SCTFEDVTSVNTYFKNCTFIDTVFDNTDFEPYKFIDSEFKNCSFF) are (Microbial infection) C.botulinum neurotoxin type A-binding. Residues 579 to 599 (AYWIYFVNFLGTLAVLPGNIV) form a helical membrane-spanning segment. Residues 600-609 (SALLMDRIGR) are Cytoplasmic-facing. A helical transmembrane segment spans residues 610-630 (LTMLGGSMVLSGISCFFLWFG). The Extracellular segment spans residues 631–636 (TSESMM). A helical membrane pass occupies residues 637–657 (IGMLCLYNGLTISAWNSLDVV). The Cytoplasmic portion of the chain corresponds to 658-669 (TVELYPTDRRAT). Residues 670–690 (GFGFLNALCKAAAVLGNLIFG) form a helical membrane-spanning segment. At 691-698 (SLVSITKS) the chain is on the extracellular side. Residues 699–719 (IPILLASTVLVCGGLVGLCLP) form a helical membrane-spanning segment. At 720 to 727 (DTRTQVLM) the chain is on the cytoplasmic side.

This sequence belongs to the major facilitator superfamily. As to quaternary structure, interacts with SYT1 in a calcium-dependent manner. In terms of assembly, (Microbial infection) Interacts with C.botulinum neurotoxin type A1 and type A2 (BoNT/A, botA). Interaction is improved by glycosylation of SV2. In terms of processing, N-glycosylated. Upon expression in a kidney cell line the most abundant glycan on Asn-534 is GlcNAc(3)Hex(5), while on Asn-559 and Asn-565 the most abundant glycan is GlcNAc2Fuc1Man3GlcNAc3Gal3. Both Asn-559 and Asn-565 have a high degree of glycan heterogeneity.

The protein localises to the cytoplasmic vesicle. Its subcellular location is the secretory vesicle. The protein resides in the synaptic vesicle membrane. Its function is as follows. Plays a role in the control of regulated secretion in neural and endocrine cells, enhancing selectively low-frequency neurotransmission. Positively regulates vesicle fusion by maintaining the readily releasable pool of secretory vesicles. Functionally, (Microbial infection) Receptor for C.botulinum neurotoxin type A (BoNT/A, botA); the toxin probably binds via extracellular loop 4. Recognition by BoNT/A relies on both protein-protein and protein-N-glycosylation; glycosylation of Asn-559 increases its affinity for BoNT/A. Also serves as a receptor for the closely related C.botulinum neurotoxin type A2; glycosylation is not essential but enhances the interaction. (Microbial infection) Possible receptor for C.botulinum neurotoxin type D (BoNT/D, botD); note that type D does not usually infect humans. In Homo sapiens (Human), this protein is Synaptic vesicle glycoprotein 2C (SV2C).